Reading from the N-terminus, the 602-residue chain is 4-hydroxy-3-methylbut-2-en-1-yl diphosphate synthase (flavodoxin) (602 aa).

[4Fe-4S] cluster is bound by residues Cys508, Cys511, Cys543, and Glu550.

It belongs to the IspG family. It depends on [4Fe-4S] cluster as a cofactor.

The catalysed reaction is (2E)-4-hydroxy-3-methylbut-2-enyl diphosphate + oxidized [flavodoxin] + H2O + 2 H(+) = 2-C-methyl-D-erythritol 2,4-cyclic diphosphate + reduced [flavodoxin]. Its pathway is isoprenoid biosynthesis; isopentenyl diphosphate biosynthesis via DXP pathway; isopentenyl diphosphate from 1-deoxy-D-xylulose 5-phosphate: step 5/6. Converts 2C-methyl-D-erythritol 2,4-cyclodiphosphate (ME-2,4cPP) into 1-hydroxy-2-methyl-2-(E)-butenyl 4-diphosphate. This is 4-hydroxy-3-methylbut-2-en-1-yl diphosphate synthase (flavodoxin) from Chlamydia trachomatis serovar L2 (strain ATCC VR-902B / DSM 19102 / 434/Bu).